The following is a 362-amino-acid chain: Adenosine deaminase (362 aa).

H19 and H21 together coordinate Zn(2+). Residues H21, D23, and G181 each coordinate substrate. H208 serves as a coordination point for Zn(2+). E211 serves as the catalytic Proton donor. A Zn(2+)-binding site is contributed by D300.

This sequence belongs to the metallo-dependent hydrolases superfamily. Adenosine and AMP deaminases family. Adenosine deaminase subfamily. Zn(2+) is required as a cofactor.

It catalyses the reaction adenosine + H2O + H(+) = inosine + NH4(+). The enzyme catalyses 2'-deoxyadenosine + H2O + H(+) = 2'-deoxyinosine + NH4(+). Its function is as follows. Catalyzes the hydrolytic deamination of adenosine and 2-deoxyadenosine. In Mycobacterium sp. (strain MCS), this protein is Adenosine deaminase.